The chain runs to 310 residues: Syntaxin-related protein KNOLLE (310 aa).

An N-acetylmethionine modification is found at methionine 1. The Cytoplasmic segment spans residues 1–283 (MNDLMTKSFM…AKSHQRNSRK (283 aa)). The stretch at 94 to 159 (NEIVSGLRKA…FQGLRQKMMS (66 aa)) forms a coiled coil. Positions 212-274 (VVEIQDRYDA…ADGANELKTA (63 aa)) constitute a t-SNARE coiled-coil homology domain. Residues 284–304 (WMCIGIIVLLLIILIVVIPII) form a helical; Anchor for type IV membrane protein membrane-spanning segment. Residues 305-310 (TSFSSS) lie on the Vesicular side of the membrane.

Belongs to the syntaxin family. As to quaternary structure, interacts with SNAP33 and/or NPSN11 to form a t-SNARE complex and with KEULE. In terms of tissue distribution, abundant in flowers and developing siliques. A low level expression is seen in the seedlings, roots, and leaves.

It is found in the membrane. Functionally, involved in cytokinesis. Acts as a cell plate-specific syntaxin, required for the fusion of vesicles at the plane of cell division. The chain is Syntaxin-related protein KNOLLE (KN) from Arabidopsis thaliana (Mouse-ear cress).